An 825-amino-acid polypeptide reads, in one-letter code: Heterogeneous nuclear ribonucleoprotein U (825 aa).

An N-acetylserine; partial modification is found at Ser-2. Ser-4 carries the phosphoserine modification. Residues 8 to 42 form the SAP domain; the sequence is VKKLKVSELKEELKKRRLSDKGLKAELMERLQAAL. Lys-17 and Lys-21 each carry N6-acetyllysine. Residues 41–281 are disordered; the sequence is ALDDEEAGGR…PQPPVEEEDE (241 aa). The residue at position 59 (Ser-59) is a Phosphoserine; by PLK1. Ser-66 carries the phosphoserine modification. A compositionally biased stretch (low complexity) spans 72 to 81; that stretch reads AGLEQEAAAG. Composition is skewed to acidic residues over residues 82–95, 120–134, and 140–153; these read GDEE…EEEG, PMEE…ENGD, and EGED…EGAG. Positions 159–178 are enriched in low complexity; it reads GEQQPQPPATQQQQPQQQRG. Lys-186 bears the N6-acetyllysine mark. Residue Ser-187 is modified to ADP-ribosylserine. Residues 199-211 are compositionally biased toward low complexity; it reads APPGARQGQQQAG. Lys-215 carries the post-translational modification N6-acetyllysine. The span at 233 to 266 shows a compositional bias: basic and acidic residues; sequence GKTEQKGGDKKRGVKRPREDHGRGYFEYIEENKY. Arg-255 carries the post-translational modification Citrulline. Position 265 is an N6-acetyllysine; alternate (Lys-265). A Glycyl lysine isopeptide (Lys-Gly) (interchain with G-Cter in SUMO1); alternate cross-link involves residue Lys-265. A Glycyl lysine isopeptide (Lys-Gly) (interchain with G-Cter in SUMO2); alternate cross-link involves residue Lys-265. A Phosphotyrosine modification is found at Tyr-266. Residues Ser-267 and Ser-271 each carry the phosphoserine modification. One can recognise a B30.2/SPRY domain in the interval 267 to 464; the sequence is SRAKSPQPPV…VEFNFGQKEK (198 aa). Thr-286 carries the post-translational modification Phosphothreonine. Lys-352 carries the post-translational modification N6-acetyllysine. The segment at 488 to 672 is ATPase domain; sequence PKGPEEKKDC…QKLLEQYKEE (185 aa). A Glycyl lysine isopeptide (Lys-Gly) (interchain with G-Cter in SUMO2) cross-link involves residue Lys-495. Position 504–511 (504–511) interacts with ATP; it reads GLPGAGKT. Lys-516 and Lys-524 each carry N6-acetyllysine; alternate. Glycyl lysine isopeptide (Lys-Gly) (interchain with G-Cter in SUMO2); alternate cross-links involve residues Lys-516 and Lys-524. Thr-532 is modified (phosphothreonine). Lys-536 is covalently cross-linked (Glycyl lysine isopeptide (Lys-Gly) (interchain with G-Cter in SUMO2)). Residue Lys-551 is modified to N6-acetyllysine. Residue Lys-565 is modified to N6-acetyllysine; alternate. A Glycyl lysine isopeptide (Lys-Gly) (interchain with G-Cter in SUMO2); alternate cross-link involves residue Lys-565. A Glycyl lysine isopeptide (Lys-Gly) (interchain with G-Cter in SUMO2) cross-link involves residue Lys-574. Thr-582 is modified (phosphothreonine). Glycyl lysine isopeptide (Lys-Gly) (interchain with G-Cter in SUMO2) cross-links involve residues Lys-609 and Lys-626. The segment at 611–626 is actin-binding; sequence EDYKQRTQKKAEVEGK. Lys-635 bears the N6-acetyllysine; alternate mark. A Glycyl lysine isopeptide (Lys-Gly) (interchain with G-Cter in SUMO2); alternate cross-link involves residue Lys-635. Residues Lys-664 and Lys-670 each participate in a glycyl lysine isopeptide (Lys-Gly) (interchain with G-Cter in SUMO2) cross-link. Over residues 671 to 683 the composition is skewed to basic and acidic residues; that stretch reads EESKKALPPEKKQ. Positions 671–749 are disordered; it reads EESKKALPPE…GGGGGGSGGI (79 aa). At Arg-702 the chain carries Omega-N-methylarginine. Gly residues predominate over residues 710-728; sequence GGFNMRGGNFRGGAPGNRG. Residues 714 to 739 are RNA-binding RGG-box; the sequence is MRGGNFRGGAPGNRGGYNRRGNMPQR. 3 positions are modified to asymmetric dimethylarginine: Arg-715, Arg-720, and Arg-727. Residues Arg-733 and Arg-739 each carry the asymmetric dimethylarginine; alternate modification. Residues Arg-733 and Arg-739 each carry the omega-N-methylarginine; alternate modification. Dimethylated arginine; in A2780 ovarian carcinoma cell line is present on Arg-739. The span at 739 to 749 shows a compositional bias: gly residues; it reads RGGGGGGSGGI. 2 positions are modified to asymmetric dimethylarginine: Arg-755 and Arg-762. The segment at 769-799 is disordered; sequence GNYNRGGMPNRGNYNQNFRGRGNNRGYKNQS. The segment covering 778 to 799 has biased composition (low complexity); the sequence is NRGNYNQNFRGRGNNRGYKNQS. Lys-814 is modified (N6-acetyllysine; alternate). Residue Lys-814 forms a Glycyl lysine isopeptide (Lys-Gly) (interchain with G-Cter in SUMO2); alternate linkage.

In terms of assembly, oligomer (via ATPase domain and RNA-binding RGG-box region); oligomerization occurs upon ATP-binding in a chromatin-associated RNAs (caRNAs)- and transcription-dependent manner and is required for chromatin decompaction. ATP hydrolysis is required to cycle from an oligomeric to monomeric state to compact chromatin. Component of the coding region determinant (CRD)-mediated complex, composed of DHX9, HNRNPU, IGF2BP1, SYNCRIP and YBX1. Identified in the spliceosome C complex. Identified in a IGF2BP1-dependent mRNP granule complex containing untranslated mRNAs. Associates with heterogeneous nuclear ribonucleoprotein (hnRNP) particles. Associates (via middle region) with the C-terminal domain (CTD) RNA polymerase II (Pol II) holoenzyme; this association occurs in a RNA-independent manner. Associates (via middle region) with the core-TFIIH basal transcription factor complex; this association inhibits the CTD phosphorylation of RNA polymerase II holoenzyme by down-regulating TFIIH kinase activity. Associates with the telomerase holoenzyme complex. Associates with spindle microtubules (MTs) in a TPX2-dependent manner. Interacts (via C-terminus) with actin; this interaction is direct and mediates association with the phosphorylated CTD of RNA polymerase II and is disrupted in presence of the long non-coding H19 RNA. Interacts with AURKA. Interacts (via C-terminus) with CBX5; this interaction is, at least in part, RNA-dependent. Interacts with CR2. Interacts with CRY1. Interacts (via C-terminus) with EP300; this interaction enhances DNA-binding to nuclear scaffold/matrix attachment region (S/MAR) elements. Interacts with ERBB4. Interacts with GEMIN5. Interacts with IGF2BP1. Interacts with IGF2BP2 and IGF2BP3. Interacts with NCL; this interaction occurs during mitosis. Interacts (via C-terminus) with NR3C1 (via C-terminus). Interacts with PLK1; this interaction induces phosphorylation of HNRNPU at Ser-59 in mitosis. Interacts with POU3F4. Interacts with SMARCA4; this interaction occurs in embryonic stem cells and stimulates global Pol II-mediated transcription. Interacts (via C-terminus) with TOP2A; this interaction protects the topoisomerase TOP2A from degradation and positively regulates the relaxation of supercoiled DNA by TOP2A in a RNA-dependent manner. Interacts with TPX2; this interaction recruits HNRNPU to spindle microtubules (MTs). Interacts with UBQLN2. Interacts (via RNA-binding RGG-box region) with ZBTB7B; the interaction facilitates the recruitment of long non-coding RNA Blnc1 by ZBTB7B. Interacts with ERCC6. (Microbial infection) Interacts with HIV-1 protein Rev. In terms of processing, cleaved at Asp-100 by CASP3 during T-cell apoptosis, resulting in a loss of DNA- and chromatin-binding activities. Post-translationally, extensively phosphorylated. Phosphorylated on Ser-59 by PLK1 and dephosphorylated by protein phosphatase 2A (PP2A) in mitosis. Arg-739 is dimethylated, probably to asymmetric dimethylarginine. Arg-733 is dimethylated, probably to asymmetric dimethylarginine. In terms of processing, citrullinated by PADI4. As to expression, widely expressed.

Its subcellular location is the nucleus. It is found in the nucleus matrix. The protein resides in the chromosome. The protein localises to the nucleus speckle. It localises to the cytoplasm. Its subcellular location is the cytoskeleton. It is found in the microtubule organizing center. The protein resides in the centrosome. The protein localises to the centromere. It localises to the kinetochore. Its subcellular location is the spindle. It is found in the spindle pole. The protein resides in the midbody. The protein localises to the cell surface. It localises to the cytoplasmic granule. In terms of biological role, DNA- and RNA-binding protein involved in several cellular processes such as nuclear chromatin organization, telomere-length regulation, transcription, mRNA alternative splicing and stability, Xist-mediated transcriptional silencing and mitotic cell progression. Plays a role in the regulation of interphase large-scale gene-rich chromatin organization through chromatin-associated RNAs (caRNAs) in a transcription-dependent manner, and thereby maintains genomic stability. Required for the localization of the long non-coding Xist RNA on the inactive chromosome X (Xi) and the subsequent initiation and maintenance of X-linked transcriptional gene silencing during X-inactivation. Plays a role as a RNA polymerase II (Pol II) holoenzyme transcription regulator. Promotes transcription initiation by direct association with the core-TFIIH basal transcription factor complex for the assembly of a functional pre-initiation complex with Pol II in a actin-dependent manner. Blocks Pol II transcription elongation activity by inhibiting the C-terminal domain (CTD) phosphorylation of Pol II and dissociates from Pol II pre-initiation complex prior to productive transcription elongation. Positively regulates CBX5-induced transcriptional gene silencing and retention of CBX5 in the nucleus. Negatively regulates glucocorticoid-mediated transcriptional activation. Key regulator of transcription initiation and elongation in embryonic stem cells upon leukemia inhibitory factor (LIF) signaling. Involved in the long non-coding RNA H19-mediated Pol II transcriptional repression. Participates in the circadian regulation of the core clock component BMAL1 transcription. Plays a role in the regulation of telomere length. Plays a role as a global pre-mRNA alternative splicing modulator by regulating U2 small nuclear ribonucleoprotein (snRNP) biogenesis. Plays a role in mRNA stability. Component of the CRD-mediated complex that promotes MYC mRNA stabilization. Enhances the expression of specific genes, such as tumor necrosis factor TNFA, by regulating mRNA stability, possibly through binding to the 3'-untranslated region (UTR). Plays a role in mitotic cell cycle regulation. Involved in the formation of stable mitotic spindle microtubules (MTs) attachment to kinetochore, spindle organization and chromosome congression. Phosphorylation at Ser-59 by PLK1 is required for chromosome alignement and segregation and progression through mitosis. Also contributes to the targeting of AURKA to mitotic spindle MTs. Binds to double- and single-stranded DNA and RNA, poly(A), poly(C) and poly(G) oligoribonucleotides. Binds to chromatin-associated RNAs (caRNAs). Associates with chromatin to scaffold/matrix attachment region (S/MAR) elements in a chromatin-associated RNAs (caRNAs)-dependent manner. Binds to the Xist RNA. Binds the long non-coding H19 RNA. Binds to SMN1/2 pre-mRNAs at G/U-rich regions. Binds to small nuclear RNAs (snRNAs). Binds to the 3'-UTR of TNFA mRNA. Binds (via RNA-binding RGG-box region) to the long non-coding Xist RNA; this binding is direct and bridges the Xist RNA and the inactive chromosome X (Xi). Also negatively regulates embryonic stem cell differentiation upon LIF signaling. Required for embryonic development. Binds to brown fat long non-coding RNA 1 (Blnc1); facilitates the recruitment of Blnc1 by ZBTB7B required to drive brown and beige fat development and thermogenesis. Functionally, (Microbial infection) Negatively regulates immunodeficiency virus type 1 (HIV-1) replication by preventing the accumulation of viral mRNA transcripts in the cytoplasm. The protein is Heterogeneous nuclear ribonucleoprotein U of Homo sapiens (Human).